A 420-amino-acid polypeptide reads, in one-letter code: Glutamyl-tRNA reductase (420 aa).

Residues 49 to 52 (TCNR), serine 109, 114 to 116 (EPQ), and glutamine 120 contribute to the substrate site. The Nucleophile role is filled by cysteine 50. 189-194 (GAGETI) serves as a coordination point for NADP(+).

Belongs to the glutamyl-tRNA reductase family. As to quaternary structure, homodimer.

It catalyses the reaction (S)-4-amino-5-oxopentanoate + tRNA(Glu) + NADP(+) = L-glutamyl-tRNA(Glu) + NADPH + H(+). It functions in the pathway porphyrin-containing compound metabolism; protoporphyrin-IX biosynthesis; 5-aminolevulinate from L-glutamyl-tRNA(Glu): step 1/2. Its function is as follows. Catalyzes the NADPH-dependent reduction of glutamyl-tRNA(Glu) to glutamate 1-semialdehyde (GSA). This is Glutamyl-tRNA reductase from Photorhabdus laumondii subsp. laumondii (strain DSM 15139 / CIP 105565 / TT01) (Photorhabdus luminescens subsp. laumondii).